Reading from the N-terminus, the 336-residue chain is MRPILLSGHERSLTQIKFNRDGDLLFSVSKDKIVCAWWTANGERLGTYNGHLGAVWTVDVSPNTVLLATGSADNSVRLWNVKTGECVKVWEFPTAVKRVEFSPDGSQLLAVTEKRMGFLGAISVLDISYEDNFQNQADEPSLRITCNESKATVAGWSYLGKYIIAGHEDGSVSQYDAKTGDQLENVQAHEFDHQINDIQFSADRTYFITASKDKSAKLISSRNLAILKTYVADTPLNSATITPKKDYVILGGGQAAMDVTTTSARQGKFEARFYHKVFEDEIGRVRGHFGPLNTVGVHPNGTAYASGGEDGYVRVHHFDKPYFDFMYEVEREQMRK.

5 WD repeats span residues 8 to 47 (GHERSLTQIKFNRDGDLLFSVSKDKIVCAWWTANGERLGT), 50 to 91 (GHLG…KVWE), 146 to 185 (CNESKATVAGWSYLGKYIIAGHEDGSVSQYDAKTGDQLEN), 190 to 229 (EFDHQINDIQFSADRTYFITASKDKSAKLISSRNLAILKT), and 287 to 326 (GHFGPLNTVGVHPNGTAYASGGEDGYVRVHHFDKPYFDFM).

This sequence belongs to the eIF-3 subunit I family. In terms of assembly, component of the eukaryotic translation initiation factor 3 (eIF-3) complex.

The protein resides in the cytoplasm. Component of the eukaryotic translation initiation factor 3 (eIF-3) complex, which is involved in protein synthesis of a specialized repertoire of mRNAs and, together with other initiation factors, stimulates binding of mRNA and methionyl-tRNAi to the 40S ribosome. The eIF-3 complex specifically targets and initiates translation of a subset of mRNAs involved in cell proliferation. The polypeptide is Eukaryotic translation initiation factor 3 subunit I (tif34) (Aspergillus terreus (strain NIH 2624 / FGSC A1156)).